A 157-amino-acid chain; its full sequence is SsrA-binding protein (157 aa).

This sequence belongs to the SmpB family.

It localises to the cytoplasm. Required for rescue of stalled ribosomes mediated by trans-translation. Binds to transfer-messenger RNA (tmRNA), required for stable association of tmRNA with ribosomes. tmRNA and SmpB together mimic tRNA shape, replacing the anticodon stem-loop with SmpB. tmRNA is encoded by the ssrA gene; the 2 termini fold to resemble tRNA(Ala) and it encodes a 'tag peptide', a short internal open reading frame. During trans-translation Ala-aminoacylated tmRNA acts like a tRNA, entering the A-site of stalled ribosomes, displacing the stalled mRNA. The ribosome then switches to translate the ORF on the tmRNA; the nascent peptide is terminated with the 'tag peptide' encoded by the tmRNA and targeted for degradation. The ribosome is freed to recommence translation, which seems to be the essential function of trans-translation. This Chlorobium chlorochromatii (strain CaD3) protein is SsrA-binding protein.